We begin with the raw amino-acid sequence, 133 residues long: Small ribosomal subunit protein uS8 (133 aa).

It belongs to the universal ribosomal protein uS8 family. Part of the 30S ribosomal subunit.

Functionally, one of the primary rRNA binding proteins, it binds directly to 16S rRNA central domain where it helps coordinate assembly of the platform of the 30S subunit. This chain is Small ribosomal subunit protein uS8, found in Ignicoccus hospitalis (strain KIN4/I / DSM 18386 / JCM 14125).